The following is a 151-amino-acid chain: Small ribosomal subunit protein uS15 (151 aa).

Belongs to the universal ribosomal protein uS15 family.

The polypeptide is Small ribosomal subunit protein uS15 (RPS13) (Candida maltosa (Yeast)).